Consider the following 460-residue polypeptide: MSLWGGRFTKISNTEFDSFNNSLRIDHRLIKDDIKSSIAWSKILLDVQVLTKKEQKIIENTLLSILKKNKNNFTKILSSNSEDIHSWLETTVINTIGDLGKKLYTGRSRNDQIATDLKLWCKRKSKKICRRIIQLQNDFLDNAYLHINTIIPGYTHLQRAQPITFSYWCLAYIEMLERDRLRILNLTQFLNSSPLGSGAISGTSWEIDRKKLAFFMGFSEITKNALDSVSDRDFILDILSAAAISMMHLSRFSEDLIFYNSGEANFIELSDSITSGSSLMPQKKNPDILELIRAKCSSVYGSLFSMFSLLKGLPLSYNKDFQEDKNHLFSGLDIWEDCLKISSLVLKNIKLKKSNCKKSAQLGYSNATELAEYLVKKGISFRDSHHITGKIVIASIKKNKCLEELDLLFLKKYCSKIESDVYQHLSLESCLNKKNSIGGVSNKQIKISLDQVKKRLSTFK.

This sequence belongs to the lyase 1 family. Argininosuccinate lyase subfamily.

It is found in the cytoplasm. It catalyses the reaction 2-(N(omega)-L-arginino)succinate = fumarate + L-arginine. It participates in amino-acid biosynthesis; L-arginine biosynthesis; L-arginine from L-ornithine and carbamoyl phosphate: step 3/3. This Buchnera aphidicola subsp. Cinara cedri (strain Cc) protein is Argininosuccinate lyase.